The chain runs to 543 residues: Glucose-6-phosphate isomerase (543 aa).

E353 serves as the catalytic Proton donor. Catalysis depends on residues H384 and K504.

Belongs to the GPI family.

It is found in the cytoplasm. The catalysed reaction is alpha-D-glucose 6-phosphate = beta-D-fructose 6-phosphate. Its pathway is carbohydrate biosynthesis; gluconeogenesis. It participates in carbohydrate degradation; glycolysis; D-glyceraldehyde 3-phosphate and glycerone phosphate from D-glucose: step 2/4. In terms of biological role, catalyzes the reversible isomerization of glucose-6-phosphate to fructose-6-phosphate. This is Glucose-6-phosphate isomerase from Roseiflexus sp. (strain RS-1).